Here is a 156-residue protein sequence, read N- to C-terminus: Fibroblast growth factor 2 (156 aa).

The propeptide occupies 1 to 9 (MAAGSITTL). Asn37 provides a ligand contact to heparin. Residue Tyr83 is modified to Phosphotyrosine; by TEC. Residue Lys96 forms a Glycyl lysine isopeptide (Lys-Gly) (interchain with G-Cter in SUMO1) linkage. The segment at 129–145 (KRTGQYKLGSKTGPGQK) is heparin-binding.

It belongs to the heparin-binding growth factors family. As to quaternary structure, monomer. Homodimer. Interacts with FGFR1, FGFR2, FGFR3 and FGFR4. Affinity between fibroblast growth factors (FGFs) and their receptors is increased by heparan sulfate glycosaminoglycans that function as coreceptors. Interacts with CSPG4, FGFBP1 and TEC. Found in a complex with FGFBP1, FGF1 and FGF2. Interacts with FGFBP3. Interacts with integrin ITGAV:ITGB3; the interaction is required for FGF2 signaling. Interacts with SNORC (via the extracellular domain). Interacts with glypican GPC3. Phosphorylation at Tyr-83 regulates FGF2 unconventional secretion.

The protein localises to the secreted. It is found in the nucleus. Functionally, acts as a ligand for FGFR1, FGFR2, FGFR3 and FGFR4. Also acts as an integrin ligand which is required for FGF2 signaling. Binds to integrin ITGAV:ITGB3. Plays an important role in the regulation of cell survival, cell division, cell differentiation and cell migration. Functions as a potent mitogen in vitro. Can induce angiogenesis. Mediates phosphorylation of ERK1/2 and thereby promotes retinal lens fiber differentiation. The sequence is that of Fibroblast growth factor 2 (FGF2) from Monodelphis domestica (Gray short-tailed opossum).